A 1006-amino-acid chain; its full sequence is E3 ubiquitin-protein ligase MIB1 (1006 aa).

An MIB/HERC2 1 domain is found at 6 to 74 (NNRVMVEGVG…AYDLRILDSA (69 aa)). The segment at 80–132 (HDGTMCDTCRQQPIIGIRWKCAECTNYDLCTVCYHGDKHHLRHRFYRITTPGS) adopts a ZZ-type zinc-finger fold. Zn(2+) contacts are provided by cysteine 85, cysteine 88, cysteine 100, cysteine 103, cysteine 109, cysteine 112, histidine 118, and histidine 122. Positions 143-221 (SKKITARGIF…MSDLKCVQDA (79 aa)) constitute an MIB/HERC2 2 domain. At serine 408 the chain carries Phosphoserine. ANK repeat units lie at residues 430 to 460 (DLNEELVKAAANGDVAKVEDLLKRPDVDVNG), 463 to 492 (AGHTAMQAASQNGHVDILKLLLKQNVDVEA), 496 to 525 (DGDRAVHHAAFGDEGAVIEVLHRGSADLNA), 529 to 558 (RRQTPLHIAVNKGHLQVVKTLLDFGCHPSL), 562 to 591 (EGDTPLHDAISKKRDDILAVLLEAGADVTI), 595 to 627 (NGFNALHHAALRGNPSAMRVLLSKLPRPWIVDE), 631 to 661 (DGYTALHLAALNNHVEVAELLVHQGNANLDI), 665 to 694 (NQQTALHLAVERQHTQIVRLLVRAGAKLDI), and 698 to 729 (DGDTPLHEALRHHTLSQLRQLQDMQDVGKVDA). 2 consecutive RING-type zinc fingers follow at residues 819–854 (CMVCSDMKRDTLFGPCGHIATCSLCSPRVKKCLICK) and 866–901 (CVVCSDKKAAVLFQPCGHMCACENCASLMKKCVQCR). Residues 935–962 (QKDKDNTNVNADVQKLQQQLQDIKEQTM) adopt a coiled-coil conformation. An RING-type 3 zinc finger spans residues 963–996 (CPVCLDRLKNMIFLCGHGTCQLCGDRMSECPICR).

In terms of assembly, interacts with CEP131 and PCM1. In terms of processing, ubiquitinated; this modification is inhibited in response to cellular stress, such as ultraviolet light (UV) radiation or heat shock. Ubiquitinated; possibly via autoubiquitination. As to expression, detected in all tissues tested. Present in embryo, embryonic stem cells, bladder, skeletal muscle, bladder, uterus, testis, stomach, colon, ileum, trachea, lung, aorta, kidney, spleen, liver and vas deferens (at protein level). Highly expressed in testis.

The protein localises to the cytoplasm. It is found in the cytoskeleton. It localises to the microtubule organizing center. The protein resides in the centrosome. Its subcellular location is the centriolar satellite. The protein localises to the cell membrane. The enzyme catalyses S-ubiquitinyl-[E2 ubiquitin-conjugating enzyme]-L-cysteine + [acceptor protein]-L-lysine = [E2 ubiquitin-conjugating enzyme]-L-cysteine + N(6)-ubiquitinyl-[acceptor protein]-L-lysine.. It participates in protein modification; protein ubiquitination. E3 ubiquitin-protein ligase that mediates ubiquitination of Delta receptors, which act as ligands of Notch proteins. Positively regulates the Delta-mediated Notch signaling by ubiquitinating the intracellular domain of Delta, leading to endocytosis of Delta receptors. Involved in ubiquitination of centriolar satellite CEP131, CEP290 and PCM1 proteins and hence inhibits primary cilium formation in proliferating cells. Mediates 'Lys-63'-linked polyubiquitination of TBK1, which probably participates in kinase activation. Probably mediates ubiquitination and subsequent proteasomal degradation of DAPK1, thereby antagonizing anti-apoptotic effects of DAPK1 to promote TNF-induced apoptosis. The chain is E3 ubiquitin-protein ligase MIB1 (Mib1) from Mus musculus (Mouse).